We begin with the raw amino-acid sequence, 124 residues long: Large ribosomal subunit protein bL12 (124 aa).

This sequence belongs to the bacterial ribosomal protein bL12 family. As to quaternary structure, homodimer. Part of the ribosomal stalk of the 50S ribosomal subunit. Forms a multimeric L10(L12)X complex, where L10 forms an elongated spine to which 2 to 4 L12 dimers bind in a sequential fashion. Binds GTP-bound translation factors.

Its function is as follows. Forms part of the ribosomal stalk which helps the ribosome interact with GTP-bound translation factors. Is thus essential for accurate translation. In Janthinobacterium sp. (strain Marseille) (Minibacterium massiliensis), this protein is Large ribosomal subunit protein bL12.